Consider the following 468-residue polypeptide: Putative FBD-associated F-box protein At5g22720 (468 aa).

The region spanning 22 to 68 is the F-box domain; sequence EDLISQLPDSLITQILFYLQTKKAVTTSVLSKRWRSLWLSTPGLVLI. The FBD domain maps to 375 to 433; the sequence is ELRLSFVPRCLLSSLEFVEIKGCSRSNMERVKYVGEPIETKLARYFVENSTILKKLVLP.

This Arabidopsis thaliana (Mouse-ear cress) protein is Putative FBD-associated F-box protein At5g22720.